The chain runs to 388 residues: Glucose-1-phosphate adenylyltransferase (388 aa).

Residues Tyr100, Gly165, 180 to 181, and Ser191 each bind alpha-D-glucose 1-phosphate; that span reads EK.

This sequence belongs to the bacterial/plant glucose-1-phosphate adenylyltransferase family. In terms of assembly, homotetramer.

It carries out the reaction alpha-D-glucose 1-phosphate + ATP + H(+) = ADP-alpha-D-glucose + diphosphate. Its pathway is glycan biosynthesis; glycogen biosynthesis. Involved in the biosynthesis of ADP-glucose, a building block required for the elongation reactions to produce glycogen. Catalyzes the reaction between ATP and alpha-D-glucose 1-phosphate (G1P) to produce pyrophosphate and ADP-Glc. The chain is Glucose-1-phosphate adenylyltransferase from Clostridium perfringens (strain SM101 / Type A).